The following is a 145-amino-acid chain: Basic phospholipase A2 PC17 (145 aa).

The N-terminal stretch at 1–21 (MYPAHLLLLLAVCVSLLGASA) is a signal peptide. Positions 22-27 (IPPLPL) are excised as a propeptide. Disulfide bonds link cysteine 38-cysteine 98, cysteine 54-cysteine 144, cysteine 56-cysteine 72, cysteine 71-cysteine 125, cysteine 78-cysteine 118, cysteine 87-cysteine 111, and cysteine 105-cysteine 116. Ca(2+) contacts are provided by tyrosine 55, glycine 57, and glycine 59. Histidine 75 is a catalytic residue. Aspartate 76 lines the Ca(2+) pocket. The active site involves aspartate 119.

It belongs to the phospholipase A2 family. Group I subfamily. D49 sub-subfamily. The cofactor is Ca(2+).

The protein localises to the secreted. It catalyses the reaction a 1,2-diacyl-sn-glycero-3-phosphocholine + H2O = a 1-acyl-sn-glycero-3-phosphocholine + a fatty acid + H(+). In terms of biological role, PLA2 catalyzes the calcium-dependent hydrolysis of the 2-acyl groups in 3-sn-phosphoglycerides. The polypeptide is Basic phospholipase A2 PC17 (Laticauda laticaudata (Blue-ringed sea krait)).